We begin with the raw amino-acid sequence, 273 residues long: NADPH-dependent 7-cyano-7-deazaguanine reductase (273 aa).

Residue Ile80–Ser82 participates in substrate binding. Residue Ser82–Lys83 coordinates NADPH. Residue Cys180 is the Thioimide intermediate of the active site. Asp187 functions as the Proton donor in the catalytic mechanism. His219 to Glu220 contacts substrate. Arg248–Gly249 is an NADPH binding site.

This sequence belongs to the GTP cyclohydrolase I family. QueF type 2 subfamily. In terms of assembly, homodimer.

It localises to the cytoplasm. It carries out the reaction 7-aminomethyl-7-carbaguanine + 2 NADP(+) = 7-cyano-7-deazaguanine + 2 NADPH + 3 H(+). It participates in tRNA modification; tRNA-queuosine biosynthesis. Catalyzes the NADPH-dependent reduction of 7-cyano-7-deazaguanine (preQ0) to 7-aminomethyl-7-deazaguanine (preQ1). This is NADPH-dependent 7-cyano-7-deazaguanine reductase from Bordetella avium (strain 197N).